The following is a 602-amino-acid chain: Elongation factor 4 (602 aa).

A tr-type G domain is found at 7 to 188 (ENIRNFSIIA…SIIRLVPPPK (182 aa)). Residues 19–24 (DHGKST) and 135–138 (NKID) each bind GTP.

This sequence belongs to the TRAFAC class translation factor GTPase superfamily. Classic translation factor GTPase family. LepA subfamily.

Its subcellular location is the cell inner membrane. The catalysed reaction is GTP + H2O = GDP + phosphate + H(+). Its function is as follows. Required for accurate and efficient protein synthesis under certain stress conditions. May act as a fidelity factor of the translation reaction, by catalyzing a one-codon backward translocation of tRNAs on improperly translocated ribosomes. Back-translocation proceeds from a post-translocation (POST) complex to a pre-translocation (PRE) complex, thus giving elongation factor G a second chance to translocate the tRNAs correctly. Binds to ribosomes in a GTP-dependent manner. The chain is Elongation factor 4 from Chlamydia trachomatis serovar D (strain ATCC VR-885 / DSM 19411 / UW-3/Cx).